A 544-amino-acid polypeptide reads, in one-letter code: CTP synthase (544 aa).

The segment at M1–L266 is amidoligase domain. Residue S13 participates in CTP binding. S13 is a UTP binding site. S14–I19 serves as a coordination point for ATP. An L-glutamine-binding site is contributed by Y54. Residue D71 participates in ATP binding. Mg(2+)-binding residues include D71 and E140. Residues D147–E149, K187–Q192, and K223 contribute to the CTP site. UTP contacts are provided by residues K187–Q192 and K223. The 252-residue stretch at K292 to L543 folds into the Glutamine amidotransferase type-1 domain. G354 contacts L-glutamine. C381 functions as the Nucleophile; for glutamine hydrolysis in the catalytic mechanism. L-glutamine is bound by residues F382–Q385, E405, and R471. Residues H516 and E518 contribute to the active site.

The protein belongs to the CTP synthase family. As to quaternary structure, homotetramer.

The enzyme catalyses UTP + L-glutamine + ATP + H2O = CTP + L-glutamate + ADP + phosphate + 2 H(+). It carries out the reaction L-glutamine + H2O = L-glutamate + NH4(+). The catalysed reaction is UTP + NH4(+) + ATP = CTP + ADP + phosphate + 2 H(+). It participates in pyrimidine metabolism; CTP biosynthesis via de novo pathway; CTP from UDP: step 2/2. Allosterically activated by GTP, when glutamine is the substrate; GTP has no effect on the reaction when ammonia is the substrate. The allosteric effector GTP functions by stabilizing the protein conformation that binds the tetrahedral intermediate(s) formed during glutamine hydrolysis. Inhibited by the product CTP, via allosteric rather than competitive inhibition. Catalyzes the ATP-dependent amination of UTP to CTP with either L-glutamine or ammonia as the source of nitrogen. Regulates intracellular CTP levels through interactions with the four ribonucleotide triphosphates. The protein is CTP synthase of Granulibacter bethesdensis (strain ATCC BAA-1260 / CGDNIH1).